Reading from the N-terminus, the 344-residue chain is N-acetyl-gamma-glutamyl-phosphate reductase (344 aa).

Residue Cys-149 is part of the active site.

This sequence belongs to the NAGSA dehydrogenase family. Type 1 subfamily.

It is found in the cytoplasm. It carries out the reaction N-acetyl-L-glutamate 5-semialdehyde + phosphate + NADP(+) = N-acetyl-L-glutamyl 5-phosphate + NADPH + H(+). It functions in the pathway amino-acid biosynthesis; L-arginine biosynthesis; N(2)-acetyl-L-ornithine from L-glutamate: step 3/4. Catalyzes the NADPH-dependent reduction of N-acetyl-5-glutamyl phosphate to yield N-acetyl-L-glutamate 5-semialdehyde. The chain is N-acetyl-gamma-glutamyl-phosphate reductase from Halorhodospira halophila (strain DSM 244 / SL1) (Ectothiorhodospira halophila (strain DSM 244 / SL1)).